Reading from the N-terminus, the 121-residue chain is ORF8 protein (121 aa).

The signal sequence occupies residues 1–15; sequence MKFLVFLGIITTVAA. Positions 19-121 constitute an SARS ORF8 Ig-like domain; that stretch reads ECSLQSCTQH…HDVRVVLDFI (103 aa). Intrachain disulfides connect Cys-25–Cys-90, Cys-37–Cys-102, and Cys-61–Cys-83. A glycan (N-linked (GlcNAc...) (complex) asparagine; by host) is linked at Asn-78.

In terms of assembly, homodimer. Interacts with host IL17RA. Interacts with host IL17RC. Interacts with host MHC-I. Post-translationally, glycosylated by the host when secreted via the conventional pathway. The glycosylated form cannot bind IL17A and would not participate in the cytokine storm.

The protein localises to the secreted. In terms of biological role, plays a role in modulating the host immune response. May act as a secreted virokine by mimicking interleukin-17A (IL17A), and thereby binding to the IL17RA receptor, leading to activation of the IL17 pathway and increased secretion of pro-inflammatory factors. Contributes to the cytokine storm during SARS-CoV-2 infection when secreted by unconventional pathway. May act by down-regulating major histocompability complex class I (MHC-I) at cell surface. May inhibit expression of some members of the IFN-stimulated gene (ISG) family including hosts IGF2BP1/ZBP1, MX1 and MX2, and DHX58. The sequence is that of ORF8 protein from Severe acute respiratory syndrome coronavirus 2 (2019-nCoV).